Reading from the N-terminus, the 284-residue chain is Pantothenate synthetase (284 aa).

30–37 (MGNLHDGH) provides a ligand contact to ATP. His37 functions as the Proton donor in the catalytic mechanism. Gln61 is a binding site for (R)-pantoate. Gln61 contributes to the beta-alanine binding site. 149–152 (GEKD) serves as a coordination point for ATP. Gln155 lines the (R)-pantoate pocket. ATP-binding positions include Val178 and 186-189 (LSSR).

This sequence belongs to the pantothenate synthetase family. In terms of assembly, homodimer.

Its subcellular location is the cytoplasm. It carries out the reaction (R)-pantoate + beta-alanine + ATP = (R)-pantothenate + AMP + diphosphate + H(+). The protein operates within cofactor biosynthesis; (R)-pantothenate biosynthesis; (R)-pantothenate from (R)-pantoate and beta-alanine: step 1/1. In terms of biological role, catalyzes the condensation of pantoate with beta-alanine in an ATP-dependent reaction via a pantoyl-adenylate intermediate. In Klebsiella pneumoniae (strain 342), this protein is Pantothenate synthetase.